A 596-amino-acid polypeptide reads, in one-letter code: Cell adhesion molecule CEACAM20 (596 aa).

The N-terminal stretch at 1–30 (MGPADSWGHHWMGILLSASLCTVWSPPAAA) is a signal peptide. Over 31-450 (QLTLNANPLD…SSLSSGAIAG (420 aa)) the chain is Extracellular. 4 Ig-like C2-type domains span residues 58–154 (PQIH…PIFL), 160–246 (PDPV…GTLK), 256–341 (PQVV…LELT), and 346–432 (PDQV…TSVL). A disulfide bridge links Cys-90 with Cys-138. 2 N-linked (GlcNAc...) asparagine glycosylation sites follow: Asn-96 and Asn-105. An intrachain disulfide couples Cys-276 to Cys-324. 5 N-linked (GlcNAc...) asparagine glycosylation sites follow: Asn-280, Asn-306, Asn-317, Asn-368, and Asn-415. Cys-375 and Cys-416 are oxidised to a cystine. A helical membrane pass occupies residues 451 to 471 (IVIGILAVIAVASELGYFLCI). Residues 472–585 (RNARRPSRKT…SIYEELVNPE (114 aa)) lie on the Cytoplasmic side of the membrane. Disordered regions lie at residues 477 to 510 (PSRKTTEDPSHETSQPIPKEEHPTEPSSESLSPE) and 527 to 563 (QPPDLPEETYETKLPSASRRGNSFSPWKPPPKPLMPP). The span at 501–510 (EPSSESLSPE) shows a compositional bias: low complexity. Residues 553–562 (WKPPPKPLMP) are compositionally biased toward pro residues. A phosphotyrosine mark is found at Tyr-578 and Tyr-589.

The protein belongs to the immunoglobulin superfamily. CEA family. As to quaternary structure, interacts (via extracellular domain) with PTPRH (via extracellular domain); the interaction dephosphorylates CEACAM20. Interacts (phosphorylated form) with SYK (via SH2 domains); the interaction further enhances CEACAM20 phosphorylation. Phosphorylated on tyrosine residues by SYK, SRC and FYN in vitro.

It is found in the cell projection. It localises to the microvillus membrane. Its subcellular location is the apical cell membrane. Functionally, together with the tyrosine-protein kinase SYK, enhances production of the cytokine CXCL8/IL-8 via the NFKB pathway and may thus have a role in the intestinal immune response. The polypeptide is Cell adhesion molecule CEACAM20 (Homo sapiens (Human)).